Here is a 305-residue protein sequence, read N- to C-terminus: Fatty acid elongase 1 (305 aa).

Helical transmembrane passes span 24–44 (MIAN…FVFI), 80–100 (VVWN…VTPV), 129–149 (FWMG…IFLV), 158–178 (FLHW…YCVG), 183–203 (IWVA…FALA), 217–237 (YITI…IFAL), and 257–277 (IQLV…VASY). The short motif at 160–164 (HWYHH) is the HxxHH motif element. Histidine 163 serves as the catalytic Nucleophile. Residues 284–305 (PTVGGPSSTAGVSNGSVEKKVK) are disordered. A compositionally biased stretch (polar residues) spans 288–299 (GPSSTAGVSNGS). N-linked (GlcNAc...) asparagine glycosylation occurs at asparagine 297.

This sequence belongs to the ELO family.

It localises to the endoplasmic reticulum membrane. It carries out the reaction an acyl-CoA + malonyl-CoA + H(+) = a 3-oxoacyl-CoA + CO2 + CoA. The protein operates within lipid metabolism; fatty acid biosynthesis. Functionally, involved in the synthesis of fatty acids. Elongates C4 fatty acids to C10. This Trypanosoma brucei brucei (strain 927/4 GUTat10.1) protein is Fatty acid elongase 1.